Here is a 266-residue protein sequence, read N- to C-terminus: Ribosome-recycling factor, chloroplastic (266 aa).

Over residues 1–26 (MPPLHAVSPAAAAAPPRALSSAARVP) the composition is skewed to low complexity. The segment at 1–30 (MPPLHAVSPAAAAAPPRALSSAARVPQRPG) is disordered. Residues 1 to 74 (MPPLHAVSPA…SDKRAVLRHA (74 aa)) constitute a chloroplast transit peptide. Coiled coils occupy residues 75–109 (TIEE…NTVR) and 207–266 (VAIR…LMKI).

The protein belongs to the RRF family.

It localises to the plastid. It is found in the chloroplast. Its function is as follows. Responsible for the release of ribosomes from messenger RNA at the termination of chloroplastic protein biosynthesis. The sequence is that of Ribosome-recycling factor, chloroplastic from Oryza sativa subsp. indica (Rice).